Here is a 194-residue protein sequence, read N- to C-terminus: ATP-dependent Clp protease proteolytic subunit (194 aa).

The active-site Nucleophile is serine 97. Histidine 122 is a catalytic residue.

The protein belongs to the peptidase S14 family. In terms of assembly, fourteen ClpP subunits assemble into 2 heptameric rings which stack back to back to give a disk-like structure with a central cavity, resembling the structure of eukaryotic proteasomes.

The protein resides in the cytoplasm. The catalysed reaction is Hydrolysis of proteins to small peptides in the presence of ATP and magnesium. alpha-casein is the usual test substrate. In the absence of ATP, only oligopeptides shorter than five residues are hydrolyzed (such as succinyl-Leu-Tyr-|-NHMec, and Leu-Tyr-Leu-|-Tyr-Trp, in which cleavage of the -Tyr-|-Leu- and -Tyr-|-Trp bonds also occurs).. In terms of biological role, cleaves peptides in various proteins in a process that requires ATP hydrolysis. Has a chymotrypsin-like activity. Plays a major role in the degradation of misfolded proteins. This is ATP-dependent Clp protease proteolytic subunit from Lactobacillus helveticus (strain DPC 4571).